Here is a 327-residue protein sequence, read N- to C-terminus: 2-keto-3-deoxygluconate permease (327 aa).

10 helical membrane passes run 10-30 (IPGG…TFSP), 42-62 (GMIT…GASI), 73-93 (KSGT…AIAS), 95-115 (IIPE…LALV), 139-159 (AGAF…IILG), 163-183 (IASF…VGFA), 199-219 (VQTL…LTVI), 224-244 (LLGI…LIIA), 254-274 (TAGI…VLIA), and 289-309 (SLVA…TSIW).

The protein belongs to the KdgT transporter family.

Its subcellular location is the cell inner membrane. The catalysed reaction is 2-dehydro-3-deoxy-D-gluconate(in) + H(+)(in) = 2-dehydro-3-deoxy-D-gluconate(out) + H(+)(out). In terms of biological role, catalyzes the proton-dependent uptake of 2-keto-3-deoxygluconate (KDG) into the cell. This Escherichia coli O157:H7 protein is 2-keto-3-deoxygluconate permease.